We begin with the raw amino-acid sequence, 282 residues long: Pantothenate synthetase (282 aa).

30–37 contributes to the ATP binding site; that stretch reads MGGLHQGH. The active-site Proton donor is His-37. A (R)-pantoate-binding site is contributed by Gln-61. A beta-alanine-binding site is contributed by Gln-61. ATP is bound at residue 146–149; sequence GQKD. Gln-152 provides a ligand contact to (R)-pantoate. Residues Ile-175 and 183 to 186 each bind ATP; that span reads MSTR.

The protein belongs to the pantothenate synthetase family. In terms of assembly, homodimer.

Its subcellular location is the cytoplasm. It carries out the reaction (R)-pantoate + beta-alanine + ATP = (R)-pantothenate + AMP + diphosphate + H(+). The protein operates within cofactor biosynthesis; (R)-pantothenate biosynthesis; (R)-pantothenate from (R)-pantoate and beta-alanine: step 1/1. Functionally, catalyzes the condensation of pantoate with beta-alanine in an ATP-dependent reaction via a pantoyl-adenylate intermediate. This chain is Pantothenate synthetase, found in Vesicomyosocius okutanii subsp. Calyptogena okutanii (strain HA).